Consider the following 362-residue polypeptide: tRNA-specific 2-thiouridylase MnmA 1 (362 aa).

Residues 29–36 (AMSGGVDS) and Met-55 each bind ATP. The active-site Nucleophile is Cys-109. An intrachain disulfide couples Cys-109 to Cys-201. Residue Gly-133 participates in ATP binding. Positions 151 to 153 (KDQ) are interaction with tRNA. The Cysteine persulfide intermediate role is filled by Cys-201.

It belongs to the MnmA/TRMU family.

The protein localises to the cytoplasm. The catalysed reaction is S-sulfanyl-L-cysteinyl-[protein] + uridine(34) in tRNA + AH2 + ATP = 2-thiouridine(34) in tRNA + L-cysteinyl-[protein] + A + AMP + diphosphate + H(+). Catalyzes the 2-thiolation of uridine at the wobble position (U34) of tRNA, leading to the formation of s(2)U34. In Fusobacterium nucleatum subsp. nucleatum (strain ATCC 25586 / DSM 15643 / BCRC 10681 / CIP 101130 / JCM 8532 / KCTC 2640 / LMG 13131 / VPI 4355), this protein is tRNA-specific 2-thiouridylase MnmA 1.